Here is a 342-residue protein sequence, read N- to C-terminus: tRNA dimethylallyltransferase (342 aa).

39–46 is an ATP binding site; that stretch reads GPTGSGKT. 41–46 lines the substrate pocket; the sequence is TGSGKT. The interaction with substrate tRNA stretch occupies residues 64–67; sequence DSMQ.

This sequence belongs to the IPP transferase family. Monomer. Requires Mg(2+) as cofactor.

The enzyme catalyses adenosine(37) in tRNA + dimethylallyl diphosphate = N(6)-dimethylallyladenosine(37) in tRNA + diphosphate. In terms of biological role, catalyzes the transfer of a dimethylallyl group onto the adenine at position 37 in tRNAs that read codons beginning with uridine, leading to the formation of N6-(dimethylallyl)adenosine (i(6)A). The protein is tRNA dimethylallyltransferase of Chlamydia felis (strain Fe/C-56) (Chlamydophila felis).